The chain runs to 418 residues: UPF0261 protein BRA1168/BS1330_II1159 (418 aa).

It belongs to the UPF0261 family.

The chain is UPF0261 protein BRA1168/BS1330_II1159 from Brucella suis biovar 1 (strain 1330).